The sequence spans 336 residues: DNA repair protein Rad51 homolog (336 aa).

Over residues 1 to 10 (MEKLTNVQAQ) the composition is skewed to polar residues. Positions 1-20 (MEKLTNVQAQQEEEEEEGPL) are disordered. 124 to 131 (GEFRCGKT) contacts ATP.

This sequence belongs to the RecA family. RAD51 subfamily. Interacts with Rrp6; the interaction is required for the recruitment of spn-A to the DNA-damage response foci. Highly expressed in ovaries.

The protein resides in the nucleus. It is found in the cytoplasm. Functionally, plays an important role in homologous strand exchange, a key step in DNA repair through homologous recombination (HR). Binds to single and double-stranded DNA and exhibits DNA-dependent ATPase activity. Underwinds duplex DNA. Spindle genes are required for each of the symmetry-breaking steps that generate polarity during egg axis formation; oocyte positioning at the posterior of the cyst to generate the first AP polarity and inhibition of gurken (grk) signaling to the follicle cell layer to polarize first the AP axis and then DV axis. May have a role in female meiosis. This is DNA repair protein Rad51 homolog (spn-A) from Drosophila melanogaster (Fruit fly).